The chain runs to 115 residues: uncharacterized protein (115 aa).

This is an uncharacterized protein from Saccharomyces cerevisiae (strain ATCC 204508 / S288c) (Baker's yeast).